The following is a 253-amino-acid chain: Ribosomal RNA small subunit methyltransferase J (253 aa).

S-adenosyl-L-methionine contacts are provided by residues 123–124 (ER) and D176.

It belongs to the methyltransferase superfamily. RsmJ family.

It is found in the cytoplasm. The catalysed reaction is guanosine(1516) in 16S rRNA + S-adenosyl-L-methionine = N(2)-methylguanosine(1516) in 16S rRNA + S-adenosyl-L-homocysteine + H(+). In terms of biological role, specifically methylates the guanosine in position 1516 of 16S rRNA. This is Ribosomal RNA small subunit methyltransferase J from Magnetococcus marinus (strain ATCC BAA-1437 / JCM 17883 / MC-1).